The primary structure comprises 358 residues: Carbamoyl phosphate synthase small chain (358 aa).

2 CPSase regions span residues 1–168 and 1–171; these read MYNR…PALG and MYNR…GRGR. Ser-46, Gly-220, and Gly-222 together coordinate L-glutamine. Positions 172–358 constitute a Glutamine amidotransferase type-1 domain; it reads RVVLVDLGMK…FIKNIDNNMK (187 aa). Residue Cys-247 is the Nucleophile of the active site. L-glutamine is bound by residues Met-248, Gln-251, Asn-289, Gly-291, and Tyr-292. Residues His-332 and Glu-334 contribute to the active site.

This sequence belongs to the CarA family. In terms of assembly, composed of two chains; the small (or glutamine) chain promotes the hydrolysis of glutamine to ammonia, which is used by the large (or ammonia) chain to synthesize carbamoyl phosphate. Tetramer of heterodimers (alpha,beta)4.

It carries out the reaction hydrogencarbonate + L-glutamine + 2 ATP + H2O = carbamoyl phosphate + L-glutamate + 2 ADP + phosphate + 2 H(+). The catalysed reaction is L-glutamine + H2O = L-glutamate + NH4(+). It functions in the pathway amino-acid biosynthesis; L-arginine biosynthesis; carbamoyl phosphate from bicarbonate: step 1/1. It participates in pyrimidine metabolism; UMP biosynthesis via de novo pathway; (S)-dihydroorotate from bicarbonate: step 1/3. Its function is as follows. Small subunit of the glutamine-dependent carbamoyl phosphate synthetase (CPSase). CPSase catalyzes the formation of carbamoyl phosphate from the ammonia moiety of glutamine, carbonate, and phosphate donated by ATP, constituting the first step of 2 biosynthetic pathways, one leading to arginine and/or urea and the other to pyrimidine nucleotides. The small subunit (glutamine amidotransferase) binds and cleaves glutamine to supply the large subunit with the substrate ammonia. This is Carbamoyl phosphate synthase small chain from Fusobacterium nucleatum subsp. nucleatum (strain ATCC 25586 / DSM 15643 / BCRC 10681 / CIP 101130 / JCM 8532 / KCTC 2640 / LMG 13131 / VPI 4355).